A 359-amino-acid chain; its full sequence is Peptide chain release factor 1 (359 aa).

Glutamine 235 bears the N5-methylglutamine mark. Residues alanine 280 to isoleucine 306 are disordered.

Belongs to the prokaryotic/mitochondrial release factor family. Post-translationally, methylated by PrmC. Methylation increases the termination efficiency of RF1.

The protein resides in the cytoplasm. In terms of biological role, peptide chain release factor 1 directs the termination of translation in response to the peptide chain termination codons UAG and UAA. This is Peptide chain release factor 1 from Rhizobium johnstonii (strain DSM 114642 / LMG 32736 / 3841) (Rhizobium leguminosarum bv. viciae).